Consider the following 329-residue polypeptide: BTB/POZ domain-containing protein At1g55760 (329 aa).

Residues 164-231 form the BTB domain; that stretch reads TDITINASDG…IYGNIQNEDF (68 aa).

The protein operates within protein modification; protein ubiquitination. Its function is as follows. May act as a substrate-specific adapter of an E3 ubiquitin-protein ligase complex (CUL3-RBX1-BTB) which mediates the ubiquitination and subsequent proteasomal degradation of target proteins. This chain is BTB/POZ domain-containing protein At1g55760, found in Arabidopsis thaliana (Mouse-ear cress).